Reading from the N-terminus, the 270-residue chain is ATP synthase subunit b 1 (270 aa).

The helical transmembrane segment at 2–22 threads the bilayer; it reads LIDWFTVIAQLINFLVLVWLL.

This sequence belongs to the ATPase B chain family. In terms of assembly, F-type ATPases have 2 components, F(1) - the catalytic core - and F(0) - the membrane proton channel. F(1) has five subunits: alpha(3), beta(3), gamma(1), delta(1), epsilon(1). F(0) has three main subunits: a(1), b(2) and c(10-14). The alpha and beta chains form an alternating ring which encloses part of the gamma chain. F(1) is attached to F(0) by a central stalk formed by the gamma and epsilon chains, while a peripheral stalk is formed by the delta and b chains.

The protein localises to the cell inner membrane. In terms of biological role, f(1)F(0) ATP synthase produces ATP from ADP in the presence of a proton or sodium gradient. F-type ATPases consist of two structural domains, F(1) containing the extramembraneous catalytic core and F(0) containing the membrane proton channel, linked together by a central stalk and a peripheral stalk. During catalysis, ATP synthesis in the catalytic domain of F(1) is coupled via a rotary mechanism of the central stalk subunits to proton translocation. Component of the F(0) channel, it forms part of the peripheral stalk, linking F(1) to F(0). The chain is ATP synthase subunit b 1 from Marinomonas sp. (strain MWYL1).